We begin with the raw amino-acid sequence, 389 residues long: Carbamoyl phosphate synthase small chain (389 aa).

A CPSase region spans residues 1–197 (MMSSPAKAAK…AAKDASIGDD (197 aa)). 3 residues coordinate L-glutamine: S51, G249, and G251. The region spanning 201-387 (HVVCMDFGMK…QEQLNEKCGV (187 aa)) is the Glutamine amidotransferase type-1 domain. C276 functions as the Nucleophile in the catalytic mechanism. L-glutamine is bound by residues L277, Q280, N318, G320, and F321. Residues H360 and E362 contribute to the active site.

The protein belongs to the CarA family. Composed of two chains; the small (or glutamine) chain promotes the hydrolysis of glutamine to ammonia, which is used by the large (or ammonia) chain to synthesize carbamoyl phosphate. Tetramer of heterodimers (alpha,beta)4.

It catalyses the reaction hydrogencarbonate + L-glutamine + 2 ATP + H2O = carbamoyl phosphate + L-glutamate + 2 ADP + phosphate + 2 H(+). The enzyme catalyses L-glutamine + H2O = L-glutamate + NH4(+). The protein operates within amino-acid biosynthesis; L-arginine biosynthesis; carbamoyl phosphate from bicarbonate: step 1/1. Its pathway is pyrimidine metabolism; UMP biosynthesis via de novo pathway; (S)-dihydroorotate from bicarbonate: step 1/3. In terms of biological role, small subunit of the glutamine-dependent carbamoyl phosphate synthetase (CPSase). CPSase catalyzes the formation of carbamoyl phosphate from the ammonia moiety of glutamine, carbonate, and phosphate donated by ATP, constituting the first step of 2 biosynthetic pathways, one leading to arginine and/or urea and the other to pyrimidine nucleotides. The small subunit (glutamine amidotransferase) binds and cleaves glutamine to supply the large subunit with the substrate ammonia. The protein is Carbamoyl phosphate synthase small chain of Rhodopirellula baltica (strain DSM 10527 / NCIMB 13988 / SH1).